The following is a 1877-amino-acid chain: Protein TIC 214 (1877 aa).

The next 6 membrane-spanning stretches (helical) occupy residues 18 to 38, 67 to 87, 90 to 110, 127 to 147, 175 to 195, and 224 to 244; these read IINSVVMVGLYYGFLTTFSIG, FIAGQLMMFISIYYAPLHLAL, PHTITVLALPYLLFHFFWNNH, LSIQCVFLNNLIFQLFNHFIL, VGWLIGHIFFMKWVELVLVWI, and IFSILLFITCVYYLGRIPSPI. Positions 249–258 are enriched in basic and acidic residues; it reads FKETSETEER. Residues 249–308 are disordered; that stretch reads FKETSETEERGEGEEETDVEIETTFETKGTRQEQEGSTEEDPSLFSEEKEDPDKIDEREE. Acidic residues-rich tracts occupy residues 259–271 and 284–298; these read GEGEEETDVEIET and GSTEEDPSLFSEEKE. Positions 299 to 308 are enriched in basic and acidic residues; sequence DPDKIDEREE.

It belongs to the TIC214 family. Part of the Tic complex.

The protein resides in the plastid. Its subcellular location is the chloroplast inner membrane. In terms of biological role, involved in protein precursor import into chloroplasts. May be part of an intermediate translocation complex acting as a protein-conducting channel at the inner envelope. This Eucalyptus globulus subsp. globulus (Tasmanian blue gum) protein is Protein TIC 214.